The primary structure comprises 859 residues: Probable helicase A859L (859 aa).

Residues 178–349 (YQELQRSGRA…KNRELFGGVA (172 aa)) form the Helicase ATP-binding domain. 191–198 (MACRCGKT) contacts ATP. The DEAH box signature appears at 298–301 (DECH). Positions 394-553 (QIIMALAYLK…RFYEHLLNPS (160 aa)) constitute a Helicase C-terminal domain.

This sequence belongs to the asfivirus helicase A859L family.

The chain is Probable helicase A859L from African swine fever virus (isolate Pig/Kenya/KEN-50/1950) (ASFV).